The primary structure comprises 63 residues: MARKCEICGKSPATGNTVAKSKVTTRRVWKPNLQKIRVVTDEGTVRRMYVCTKCLKSGKVQKA.

Belongs to the bacterial ribosomal protein bL28 family.

This chain is Large ribosomal subunit protein bL28, found in Petrotoga mobilis (strain DSM 10674 / SJ95).